The sequence spans 873 residues: DNA mismatch repair protein MutS (873 aa).

601-608 (GPNMSGKS) provides a ligand contact to ATP.

It belongs to the DNA mismatch repair MutS family.

This protein is involved in the repair of mismatches in DNA. It is possible that it carries out the mismatch recognition step. This protein has a weak ATPase activity. In Staphylococcus epidermidis (strain ATCC 12228 / FDA PCI 1200), this protein is DNA mismatch repair protein MutS.